The following is a 567-amino-acid chain: Urease subunit alpha (567 aa).

Residues 129 to 567 form the Urease domain; sequence GGIDTHIHWI…LPMAQRYFLF (439 aa). Positions 134, 136, and 217 each coordinate Ni(2+). At Lys217 the chain carries N6-carboxylysine. His219 contacts substrate. 2 residues coordinate Ni(2+): His246 and His272. His320 (proton donor) is an active-site residue. Asp360 lines the Ni(2+) pocket.

Belongs to the metallo-dependent hydrolases superfamily. Urease alpha subunit family. In terms of assembly, heterotrimer of UreA (gamma), UreB (beta) and UreC (alpha) subunits. Three heterotrimers associate to form the active enzyme. The apoenzyme interacts with an accessory complex composed of UreD, UreF and UreG, which is required for the assembly of the nickel containing metallocenter of UreC. The UreE protein may also play a direct role as a metallochaperone in nickel transfer to the urease apoprotein. Ni cation serves as cofactor. Carboxylation allows a single lysine to coordinate two nickel ions.

The protein resides in the cytoplasm. The enzyme catalyses urea + 2 H2O + H(+) = hydrogencarbonate + 2 NH4(+). Its pathway is nitrogen metabolism; urea degradation; CO(2) and NH(3) from urea (urease route): step 1/1. With respect to regulation, the apoenzyme can be activated in vitro in the presence of nickel ions and carbon dioxide, which promotes carboxylation of Lys-217. The sequence is that of Urease subunit alpha from Klebsiella aerogenes (Enterobacter aerogenes).